The following is a 109-amino-acid chain: Nucleoid-associated protein HAPS_1040 (109 aa).

The tract at residues 1–21 is disordered; sequence MFGKGGLGGLMKQAQQMQERM. A compositionally biased stretch (low complexity) spans 10 to 19; that stretch reads LMKQAQQMQE.

This sequence belongs to the YbaB/EbfC family. Homodimer.

Its subcellular location is the cytoplasm. It is found in the nucleoid. Functionally, binds to DNA and alters its conformation. May be involved in regulation of gene expression, nucleoid organization and DNA protection. The protein is Nucleoid-associated protein HAPS_1040 of Glaesserella parasuis serovar 5 (strain SH0165) (Haemophilus parasuis).